The chain runs to 99 residues: Large ribosomal subunit protein eL30 (99 aa).

This sequence belongs to the eukaryotic ribosomal protein eL30 family.

The chain is Large ribosomal subunit protein eL30 from Methanosarcina acetivorans (strain ATCC 35395 / DSM 2834 / JCM 12185 / C2A).